The following is a 121-amino-acid chain: Large ribosomal subunit protein uL18 (121 aa).

It belongs to the universal ribosomal protein uL18 family. In terms of assembly, part of the 50S ribosomal subunit; part of the 5S rRNA/L5/L18/L25 subcomplex. Contacts the 5S and 23S rRNAs.

Its function is as follows. This is one of the proteins that bind and probably mediate the attachment of the 5S RNA into the large ribosomal subunit, where it forms part of the central protuberance. This Burkholderia multivorans (strain ATCC 17616 / 249) protein is Large ribosomal subunit protein uL18.